A 242-amino-acid chain; its full sequence is UPF0309 protein BH3325 (242 aa).

Residues 34–217 (VSEAVMNGGR…HLLVQQGFEP (184 aa)) enclose the SIS domain.

The protein belongs to the UPF0309 family.

This chain is UPF0309 protein BH3325, found in Halalkalibacterium halodurans (strain ATCC BAA-125 / DSM 18197 / FERM 7344 / JCM 9153 / C-125) (Bacillus halodurans).